Here is a 104-residue protein sequence, read N- to C-terminus: PTS system lactose-specific EIIA component (104 aa).

The region spanning 1–102 is the PTS EIIA type-3 domain; the sequence is MNRDEVQLLG…MKHLIELYKK (102 aa). His-78 serves as the catalytic Tele-phosphohistidine intermediate. A Phosphohistidine; by HPr modification is found at His-78. Residue Asp-81 participates in Mg(2+) binding.

In terms of assembly, homotrimer. Requires Mg(2+) as cofactor.

The protein resides in the cytoplasm. The phosphoenolpyruvate-dependent sugar phosphotransferase system (sugar PTS), a major carbohydrate active transport system, catalyzes the phosphorylation of incoming sugar substrates concomitantly with their translocation across the cell membrane. The enzyme II LacEF PTS system is involved in lactose transport. The polypeptide is PTS system lactose-specific EIIA component (Staphylococcus epidermidis (strain ATCC 35984 / DSM 28319 / BCRC 17069 / CCUG 31568 / BM 3577 / RP62A)).